The sequence spans 120 residues: uncharacterized protein (120 aa).

N-linked (GlcNAc...) asparagine; by host glycosylation is found at asparagine 29 and asparagine 68. A helical transmembrane segment spans residues 74 to 94 (IFNGLGFILIVIFIYLLIITL).

This sequence belongs to the asfivirus B117L family.

The protein resides in the host membrane. It is found in the virion. This is an uncharacterized protein from Ornithodoros (relapsing fever ticks).